A 425-amino-acid chain; its full sequence is RNA polymerase II-associated factor 1 homolog (425 aa).

The stretch at 152–174 (KKNQQVEDMYRDKQSQIDAINKT) forms a coiled coil. The tract at residues 331–425 (SRKSKLTLTY…KEPTVDSDSD (95 aa)) is disordered. Basic and acidic residues-rich tracts occupy residues 344–380 (SELEQKDMNKREAELYEQPKTRKQEILEKIQEKKEEG) and 393–402 (DKPQKSRSDS).

The protein belongs to the PAF1 family. Component of the PAF1 complex which consists of at least cdc-73, ctr-9, leo-1, pafo-1 and rtfo-1.

The protein localises to the nucleus. Component of the PAF1 complex which is a multifunctional complex involved in transcription initiation via genetic interactions with TATA-binding proteins, elongation and transcription-coupled histone modification. This is RNA polymerase II-associated factor 1 homolog from Caenorhabditis elegans.